The primary structure comprises 500 residues: E3 ubiquitin-protein ligase TRIM69 (500 aa).

The tract at residues 1-22 (MEVSSRPPSNFDPGNYVEMSDP) is disordered. Residues 1 to 153 (MEVSSRPPSN…SMGQSKDFLQ (153 aa)) are necessary for nuclear localization. Residues 42–83 (CPLCNDWFRDPLMLTCGHNFCQDCIQSFWKVHSKETFCPDCK) form an RING-type zinc finger. The stretch at 217–256 (NKEKDILNDLRDEGKLLNEEMEVNLNQIQEQCLVAKDMLA) forms a coiled coil. The region spanning 306 to 500 (PIQYIIWKEM…KEPLHIVHPQ (195 aa)) is the B30.2/SPRY domain. S342 carries the post-translational modification Phosphoserine.

The protein belongs to the TRIM/RBCC family. As to quaternary structure, homo-multimer; required for antiviral activity. Interacts with PML. Post-translationally, phosphorylated. Phosphorylation is necessary for nuclear localization. Expressed in spermatid.

It localises to the cytoplasm. It is found in the nucleus. The protein resides in the nucleus speckle. Its subcellular location is the cytoskeleton. The protein localises to the microtubule organizing center. It localises to the centrosome. It catalyses the reaction S-ubiquitinyl-[E2 ubiquitin-conjugating enzyme]-L-cysteine + [acceptor protein]-L-lysine = [E2 ubiquitin-conjugating enzyme]-L-cysteine + N(6)-ubiquitinyl-[acceptor protein]-L-lysine.. The protein operates within protein modification; protein ubiquitination. E3 ubiquitin ligase that plays an important role in antiviral immunity by restricting different viral infections including dengue virus or vesicular stomatitis indiana virus. Ubiquitinates viral proteins such as dengue virus NS3 thereby limiting infection. In addition, acts as a key mediator of type I interferon induced microtubule stabilization by directly associating to microtubules independently of its E3 ligase activity. Also plays a role in cataract formation together with TP53. Mechanistically, inhibits UVB-induced cell apoptosis and reactive oxygen species (ROS) production by inducing TP53 ubiquitination. Regulates centrosome dynamics and mitotic progression by ubiquitinating STK3/MST2; leading to its redistribution to the perinuclear cytoskeleton and subsequent phosphorylation by PLK1. In Mus musculus (Mouse), this protein is E3 ubiquitin-protein ligase TRIM69 (Trim69).